Consider the following 245-residue polypeptide: MNVLQKQSIAEMKRVLRNKYFVLWSLIMPIAFYYFFTNVVNTNVPDQRAWEAHYLMSMTVFSVMGSSIMTLGIRMVQERSQGWAAFIRLTPLPDHIYLSAQMIGQSVIHVLSITVIFLFGAIINDIALSPFEWMMSGLWILFGALPFLALGTLIGLMRKVETAAGISNVLYMLLALGGGMWMPFEVMPDMMQSIGQWLPSYHFGSGAWELVRGGSPTWKNILILIAYMMLFMLLSKYIRRKQEAV.

6 consecutive transmembrane segments (helical) span residues 20–40, 53–73, 103–123, 137–157, 164–184, and 214–234; these read YFVL…TNVV, HYLM…TLGI, IGQS…GAII, GLWI…IGLM, AGIS…WMPF, and GSPT…FMLL. The 223-residue stretch at 20-242 folds into the ABC transmembrane type-2 domain; it reads YFVLWSLIMP…LLSKYIRRKQ (223 aa).

It belongs to the ABC-2 integral membrane protein family.

It localises to the cell membrane. The protein is Putative transport permease YvfS (yvfS) of Bacillus subtilis (strain 168).